Here is a 107-residue protein sequence, read N- to C-terminus: Anti-adapter protein IraM (107 aa).

Belongs to the IraM/RssC family.

The protein localises to the cytoplasm. In terms of biological role, inhibits RpoS proteolysis by regulating RssB activity, thereby increasing the stability of the sigma stress factor RpoS during magnesium starvation. This Escherichia coli O7:K1 (strain IAI39 / ExPEC) protein is Anti-adapter protein IraM.